Reading from the N-terminus, the 335-residue chain is Delta(7)-sterol 5(6)-desaturase erg3B (335 aa).

3 helical membrane-spanning segments follow: residues 74 to 94, 113 to 133, and 152 to 172; these read IWAF…ALVF, IGQA…LFLA, and LYTY…IYWI. The Fatty acid hydroxylase domain occupies 160 to 284; it reads LFIAFTDFAI…FITFWDRIGG (125 aa). The Histidine box-1 signature appears at 173–177; sequence HRGLH. The Histidine box-2 motif lies at 186–190; the sequence is HKPHH. A helical membrane pass occupies residues 219 to 239; that stretch reads PFLFPLQKAAYLGLFVFVTIW. The N-linked (GlcNAc...) asparagine glycan is linked to asparagine 256. A Histidine box-3 motif is present at residues 261–265; that stretch reads HTIHH.

Belongs to the sterol desaturase family. The cofactor is Fe cation.

It localises to the endoplasmic reticulum membrane. It functions in the pathway steroid metabolism; ergosterol biosynthesis. Functionally, delta(7)-sterol 5(6)-desaturase; part of the third module of ergosterol biosynthesis pathway that includes the late steps of the pathway. Erg3B catalyzes the introduction of a C-5 double bond in the B ring to produce 5-dehydroepisterol. The third module or late pathway involves the ergosterol synthesis itself through consecutive reactions that mainly occur in the endoplasmic reticulum (ER) membrane. Firstly, the squalene synthase erg9 catalyzes the condensation of 2 farnesyl pyrophosphate moieties to form squalene, which is the precursor of all steroids. Squalene synthase is crucial for balancing the incorporation of farnesyl diphosphate (FPP) into sterol and nonsterol isoprene synthesis. Secondly, squalene is converted into lanosterol by the consecutive action of the squalene epoxidase erg1 and the lanosterol synthase erg7. Then, the delta(24)-sterol C-methyltransferase erg6 methylates lanosterol at C-24 to produce eburicol. Eburicol is the substrate of the sterol 14-alpha demethylase encoded by cyp51A and cyp51B, to yield 4,4,24-trimethyl ergosta-8,14,24(28)-trienol. The C-14 reductase erg24 then reduces the C14=C15 double bond which leads to 4,4-dimethylfecosterol. A sequence of further demethylations at C-4, involving the C-4 demethylation complex containing the C-4 methylsterol oxidases erg25A or erg25B, the sterol-4-alpha-carboxylate 3-dehydrogenase erg26 and the 3-keto-steroid reductase erg27, leads to the production of fecosterol via 4-methylfecosterol. The C-8 sterol isomerase erg2 then catalyzes the reaction which results in unsaturation at C-7 in the B ring of sterols and thus converts fecosterol to episterol. The sterol-C5-desaturase erg3B then catalyzes the introduction of a C-5 double bond in the B ring to produce 5-dehydroepisterol. The 2 other sterol-C5-desaturases, erg3A and erg3C, seem to be less important in ergosterol biosynthesis. The C-22 sterol desaturase erg5 further converts 5-dehydroepisterol into ergosta-5,7,22,24(28)-tetraen-3beta-ol by forming the C-22(23) double bond in the sterol side chain. Finally, ergosta-5,7,22,24(28)-tetraen-3beta-ol is substrate of the C-24(28) sterol reductases erg4A and erg4B to produce ergosterol. Possible alternative sterol biosynthetic pathways might exist from fecosterol to ergosterol, depending on the activities of the erg3 isoforms. This chain is Delta(7)-sterol 5(6)-desaturase erg3B, found in Aspergillus fumigatus (strain ATCC MYA-4609 / CBS 101355 / FGSC A1100 / Af293) (Neosartorya fumigata).